Reading from the N-terminus, the 153-residue chain is UPF0178 protein CC_1215 (153 aa).

It belongs to the UPF0178 family.

In Caulobacter vibrioides (strain ATCC 19089 / CIP 103742 / CB 15) (Caulobacter crescentus), this protein is UPF0178 protein CC_1215.